The primary structure comprises 127 residues: MSLLSNMISIVKVGYNARHLQVIVQNSKLCINVLSVLYKLGYIRGFIIKDQKNITILLKYINNKPAVRNIAVISTPGRRTYLKHKKLEKFLTKKDSGFLILSTSKGILTDEESNMFKIGGEALLKIN.

Belongs to the universal ribosomal protein uS8 family.

It is found in the mitochondrion. This chain is Small ribosomal subunit protein uS8m (RPS8), found in Acanthamoeba castellanii (Amoeba).